The following is a 370-amino-acid chain: tRNA-specific 2-thiouridylase MnmA (370 aa).

Residues 25 to 32 and Leu-51 contribute to the ATP site; that span reads ALSGGVDS. The Nucleophile role is filled by Cys-112. Cys-112 and Cys-211 are disulfide-bonded. ATP is bound at residue Gly-137. The tract at residues 161–163 is interaction with tRNA; the sequence is KDQ. Catalysis depends on Cys-211, which acts as the Cysteine persulfide intermediate. Residues 316–317 are interaction with tRNA; it reads RY.

It belongs to the MnmA/TRMU family.

The protein resides in the cytoplasm. The catalysed reaction is S-sulfanyl-L-cysteinyl-[protein] + uridine(34) in tRNA + AH2 + ATP = 2-thiouridine(34) in tRNA + L-cysteinyl-[protein] + A + AMP + diphosphate + H(+). Catalyzes the 2-thiolation of uridine at the wobble position (U34) of tRNA, leading to the formation of s(2)U34. This chain is tRNA-specific 2-thiouridylase MnmA, found in Synechococcus sp. (strain JA-3-3Ab) (Cyanobacteria bacterium Yellowstone A-Prime).